The primary structure comprises 338 residues: Lipoate-protein ligase A (338 aa).

Positions P29–V216 constitute a BPL/LPL catalytic domain. ATP contacts are provided by residues R71, G76–F79, and K134. Position 134 (K134) interacts with (R)-lipoate.

Belongs to the LplA family. Monomer.

The protein localises to the cytoplasm. It carries out the reaction L-lysyl-[lipoyl-carrier protein] + (R)-lipoate + ATP = N(6)-[(R)-lipoyl]-L-lysyl-[lipoyl-carrier protein] + AMP + diphosphate + H(+). The protein operates within protein modification; protein lipoylation via exogenous pathway; protein N(6)-(lipoyl)lysine from lipoate: step 1/2. It functions in the pathway protein modification; protein lipoylation via exogenous pathway; protein N(6)-(lipoyl)lysine from lipoate: step 2/2. Functionally, catalyzes both the ATP-dependent activation of exogenously supplied lipoate to lipoyl-AMP and the transfer of the activated lipoyl onto the lipoyl domains of lipoate-dependent enzymes. The polypeptide is Lipoate-protein ligase A (Escherichia coli O157:H7).